Here is a 1493-residue protein sequence, read N- to C-terminus: Mitogen-activated protein kinase kinase kinase 1 (1493 aa).

Over residues 1 to 23 (MAAAAGDRASSSGFPGAAAASPE) the composition is skewed to low complexity. Disordered stretches follow at residues 1-178 (MAAA…PEER) and 194-300 (HEWL…EETS). N-acetylalanine is present on alanine 2. Serine 21 is subject to Phosphoserine. A compositionally biased stretch (gly residues) spans 24 to 35 (AGGGGGGGGALQ). Residues 36–46 (GSGAPAAGAAG) show a composition bias toward low complexity. Residues 89-99 (PPCPSTSPSPE) show a composition bias toward pro residues. Positions 140–156 (ARSPAGAEPPSAAAPSG) are enriched in low complexity. Residue serine 142 is modified to Phosphoserine. Positions 157-178 (REMENKETLKGLHKMEDRPEER) are enriched in basic and acidic residues. Over residues 235–256 (SAAPAPKGRRSPSPGSSPSGRS) the composition is skewed to low complexity. At serine 270 the chain carries Phosphoserine. Threonine 280 bears the Phosphothreonine mark. Phosphoserine occurs at positions 287, 292, and 295. The SWIM-type zinc-finger motif lies at 333–361 (YRVFIGPQNCSCGRGAFCIHLLFVMLRVF). The segment covering 411–428 (SNSHTLSSSSTSTSSSEN) has biased composition (low complexity). Residues 411–431 (SNSHTLSSSSTSTSSSENSIK) form a disordered region. Residues 438–487 (CPICLLGMLDEESLTVCEDGCRNKLHHHCMSIWAEECRRNREPLICPLCR) form an RING-type zinc finger. Serine 502 and serine 526 each carry phosphoserine. Disordered stretches follow at residues 506–531 (SPAS…RRNQ) and 895–914 (EHTV…RLSA). The span at 512-527 (AVQQPSSPQQPVAGSQ) shows a compositional bias: low complexity. Residue serine 915 is modified to Phosphoserine. Disordered regions lie at residues 927 to 957 (SVGL…LNSS) and 992 to 1066 (PCKI…TLDL). Polar residues predominate over residues 998 to 1013 (ASPQTQRKFSLQFQRN). Phosphoserine is present on residues serine 999 and serine 1024. Over residues 1049 to 1063 (GSTSKLGDATKSSMT) the composition is skewed to polar residues. Positions 1224–1489 (WLKGQQIGLG…SRELLKHPVF (266 aa)) constitute a Protein kinase domain. ATP is bound by residues 1230-1238 (IGLGAFSSC) and lysine 1253. The active-site Proton acceptor is the aspartate 1350. Phosphothreonine; by autocatalysis occurs at positions 1381 and 1393.

The protein belongs to the protein kinase superfamily. STE Ser/Thr protein kinase family. MAP kinase kinase kinase subfamily. Binds both upstream activators and downstream substrates in multimolecular complexes through its N-terminus. Oligomerizes after binding MAP4K2 or TRAF2. Interacts with AXIN1. Interacts (via the kinase catalytic domain) with STK38. Interacts with GRIPAP1. The cofactor is Mg(2+). In terms of processing, autophosphorylated. As to expression, highly expressed in the heart and spleen while a lower level expression is seen in the liver.

The enzyme catalyses L-seryl-[protein] + ATP = O-phospho-L-seryl-[protein] + ADP + H(+). It catalyses the reaction L-threonyl-[protein] + ATP = O-phospho-L-threonyl-[protein] + ADP + H(+). With respect to regulation, activated by autophosphorylation on Thr-1381 and Thr-1393 following oligomerization. Functionally, component of a protein kinase signal transduction cascade. Activates the ERK and JNK kinase pathways by phosphorylation of MAP2K1 and MAP2K4. May phosphorylate the MAPK8/JNK1 kinase. Activates CHUK and IKBKB, the central protein kinases of the NF-kappa-B pathway. This is Mitogen-activated protein kinase kinase kinase 1 (Map3k1) from Mus musculus (Mouse).